Consider the following 653-residue polypeptide: Hepatocyte growth factor activator serine protease (653 aa).

The first 34 residues, 1 to 34, serve as a signal peptide directing secretion; that stretch reads MGRQAWISSLCPLPRPCPFLLLLLLLVVPRGAQP. Positions 34–98 are disordered; that stretch reads PQAGRNHTEP…SSSPPGGQVL (65 aa). A propeptide spans 35–369 (removed in mature form); the sequence is QAGRNHTEPP…RLTACESLAR (335 aa). 3 N-linked (GlcNAc...) asparagine glycosylation sites follow: N39, N47, and N63. A compositionally biased stretch (low complexity) spans 47-59; it reads NVTATPVTPTIPV. Residues 100–147 form the Fibronectin type-II domain; it reads ESGQPCRFPFRYGGRMLHSCTSEGSAYRKWCATTHNYDRDRAWGYCAE. Intrachain disulfides connect C105/C130, C119/C145, C161/C172, C166/C183, C185/C194, C199/C227, C225/C234, C242/C253, C247/C264, C266/C275, C283/C364, C304/C346, C335/C359, C392/C519, C430/C446, C438/C508, C533/C602, C565/C581, and C592/C620. One can recognise an EGF-like 1 domain in the interval 157–195; sequence ILDPCASGPCLNGGTCSSTHDHGSYHCSCPLAFTGKDCG. The 41-residue stretch at 197-237 folds into the Fibronectin type-I domain; the sequence is EKCFDETRYEYFEVGDHWARVSEGHVEQCGCMEGQARCEDT. The 39-residue stretch at 238 to 276 folds into the EGF-like 2 domain; that stretch reads HHTACLSSPCLNGGTCHLIVGTGTSVCTCPLGYAGRFCN. The Kringle domain maps to 283–364; sequence CFLGNGTEYR…SWEYCRLTAC (82 aa). The N-linked (GlcNAc...) asparagine glycan is linked to N287. One can recognise a Peptidase S1 domain in the interval 406–644; that stretch reads IIGGSSSLPG…YVDWINDRIR (239 aa). The Charge relay system role is filled by H445. Residue N466 is glycosylated (N-linked (GlcNAc...) asparagine). The active-site Charge relay system is the D495. N544 carries N-linked (GlcNAc...) asparagine glycosylation. The active-site Charge relay system is S596.

Belongs to the peptidase S1 family. Heterodimer of a short chain and a long chain linked by a disulfide bond. The active form of HGFAC presents in the serum is derived from the COOH-terminal region of the precursor by the cleavage of bonds between Arg-369 and Val-370 and Arg-405 and Ile-406.

The protein resides in the secreted. In terms of biological role, serine protease that hydrolyzes the inactive zymogen hepatocyte growth factor (HGFsc) to an activated disulfide-linked heterodimer, then initiating hepatocyte growth factor receptor signaling pathway. This chain is Hepatocyte growth factor activator serine protease, found in Mus musculus (Mouse).